The primary structure comprises 641 residues: MTDGHLFNNILLGGRAGSNPGQFKVYSGGLAWKRQGGGKTIEIEKSDLTSVTWMKVPRAYQLGVRTKDGLFYKFIGFREQDVSSLTNFMQKNMGLSPDEKQLSVSGQNWGGIDINGNMLTFMVGSKQAFEVSLADVSQTQMQGKTDVLLEFHVDDTTGGNEKDSLMDLSFHVPTSNTQFLGDENRTAAQVLWETIMGVADVDSSEEAVVTFEGIAILTPRGRYSVELHLSFLRLQGQANDFKIQYSSIVRLFLLPKSNNPHTFVVVTLDPPIRKGQTLYPHIVIQFETEAVVERNLALTKEVLAEKYKDRLEESYKGLIHEVFTKVLRGLSGAKVTRPGSFRSCQDGYAVKSSLKAEDGLLYPLEKGFFFLPKPPTLILHEEIEFVEFERHGAGGASISSHYFDLLVKLKNDQEHLFRNIQRSEYHNLFNFINGKHLKIMNLGDGQGATGGVTAVLRDTDDDAVDPHLERIKNQAGDEESDEEDEDFVADKDDSGSPTDDSGGEDSDASESGGEKEKLSKKEASSSKPPVKRKPKGRDEEGSDKRKPKKKKDPNAPKRAMTPFMYFSMAERGNMKNNNPDLPTTEIAKKLGEMWQKMTGEEKQPYIQQSQVDKKRYEKESAVYRGAAAMDVDSGSGGNESD.

The segment at 459–561 (TDDDAVDPHL…DPNAPKRAMT (103 aa)) is disordered. The span at 476 to 487 (GDEESDEEDEDF) shows a compositional bias: acidic residues. The span at 512-524 (GGEKEKLSKKEAS) shows a compositional bias: basic and acidic residues. The segment at residues 556–624 (PKRAMTPFMY…RYEKESAVYR (69 aa)) is a DNA-binding region (HMG box).

This sequence belongs to the SSRP1 family. Component of the FACT complex, a stable heterodimer of SPT16 and SSRP1.

It localises to the nucleus. It is found in the chromosome. Functionally, component of the FACT complex, a general chromatin factor that acts to reorganize nucleosomes. The FACT complex is involved in multiple processes that require DNA as a template such as mRNA elongation, DNA replication and DNA repair. During transcription elongation the FACT complex acts as a histone chaperone that both destabilizes and restores nucleosomal structure. It facilitates the passage of RNA polymerase II and transcription by promoting the dissociation of one histone H2A-H2B dimer from the nucleosome, then subsequently promotes the reestablishment of the nucleosome following the passage of RNA polymerase II. Binds specifically to double-stranded DNA. The protein is FACT complex subunit SSRP1-A (SSRP1-A) of Oryza sativa subsp. japonica (Rice).